Here is a 147-residue protein sequence, read N- to C-terminus: Male-specific protein scotti (147 aa).

Positions 55 to 93 (PQEPPLGVFPAQGGPNGPPRRRKKRSFYTMTKPTPPCQS) are disordered. Over residues 82–93 (YTMTKPTPPCQS) the composition is skewed to polar residues. Asn128 carries an N-linked (GlcNAc...) asparagine glycan.

Belongs to the male-specific scotti family. Expressed in primary spermatocytes and round spermatids. Low expression is seen in very short elongating cysts, but were detected at high levels in a few longer spermatid cysts.

Functionally, post-meiotically transcribed gene that has a role in late spermiogenesis; required for actin cone progression during spermatid individualization. The chain is Male-specific protein scotti from Drosophila melanogaster (Fruit fly).